Here is a 559-residue protein sequence, read N- to C-terminus: Probable D-2-hydroxyglutarate dehydrogenase, mitochondrial (559 aa).

The transit peptide at 1–80 (MARRAAAGLL…MNFEVQKRSF (80 aa)) directs the protein to the mitochondrion. In terms of domain architecture, FAD-binding PCMH-type spans 131–310 (YKGSSQLLLL…TKIAILTPAK (180 aa)).

The protein belongs to the FAD-binding oxidoreductase/transferase type 4 family. In terms of assembly, homodimer. FAD is required as a cofactor.

The protein localises to the mitochondrion. It catalyses the reaction (R)-2-hydroxyglutarate + A = 2-oxoglutarate + AH2. Its function is as follows. Catalyzes the oxidation of D-2-hydroxyglutarate to alpha-ketoglutarate. In Oryza sativa subsp. japonica (Rice), this protein is Probable D-2-hydroxyglutarate dehydrogenase, mitochondrial (D2HGDH).